Consider the following 253-residue polypeptide: RAD51-associated protein 1 (253 aa).

The segment at 32 to 51 (APLTKKSRTQPKEPKKENKK) is interaction with DNA. Disordered regions lie at residues 33–74 (PLTK…TSLD), 141–169 (DREH…EGND), and 184–244 (KKIK…WVPP). The segment covering 154 to 169 (PDEESEEDSDYREGND) has biased composition (acidic residues). Basic residues predominate over residues 184–195 (KKIKRQTRKEKK). The segment at 190-241 (TRKEKKTPKSENNTTVMELKSEQTQKMMSTSSEPVGRPLYTSSPVTNKKPKW) is interaction with DNA. Over residues 199-222 (SENNTTVMELKSEQTQKMMSTSSE) the composition is skewed to polar residues.

As to quaternary structure, monomer.

Its subcellular location is the chromosome. It is found in the nucleus. Structure-specific DNA-binding protein involved in DNA repair by promoting RAD51-mediated homologous recombination. Acts by stimulating D-Loop formation by RAD51: specifically enhances joint molecule formation through its structure-specific DNA interaction and its interaction with RAD51. Binds single-stranded DNA (ssDNA), double-stranded DNA (dsDNA) and secondary DNA structures, such as D-loop structures: has a strong preference for branched-DNA structures that are obligatory intermediates during joint molecule formation. Involved in mitotic recombination-dependent replication fork processing. Also involved in meiosis by promoting DMC1-mediated homologous meiotic recombination. The sequence is that of RAD51-associated protein 1 from Gallus gallus (Chicken).